Reading from the N-terminus, the 492-residue chain is Glutamyl-tRNA(Gln) amidotransferase subunit A (492 aa).

Active-site charge relay system residues include lysine 78 and serine 158. Serine 182 (acyl-ester intermediate) is an active-site residue.

Belongs to the amidase family. GatA subfamily. In terms of assembly, heterotrimer of A, B and C subunits.

It catalyses the reaction L-glutamyl-tRNA(Gln) + L-glutamine + ATP + H2O = L-glutaminyl-tRNA(Gln) + L-glutamate + ADP + phosphate + H(+). In terms of biological role, allows the formation of correctly charged Gln-tRNA(Gln) through the transamidation of misacylated Glu-tRNA(Gln) in organisms which lack glutaminyl-tRNA synthetase. The reaction takes place in the presence of glutamine and ATP through an activated gamma-phospho-Glu-tRNA(Gln). This chain is Glutamyl-tRNA(Gln) amidotransferase subunit A, found in Rhodopseudomonas palustris (strain HaA2).